The sequence spans 97 residues: Protein GLUTAMINE DUMPER 7 (97 aa).

Residues 1 to 25 lie on the Extracellular side of the membrane; sequence MSLHRDSMVPVNSRLENMDSPILSK. Residues 26-46 traverse the membrane as a helical segment; the sequence is ICAWGVMLGLFALSLFAMAYA. Over 47–97 the chain is Cytoplasmic; sequence CYHKQTSNSCIEEKQGKKQVLKPLDMEPKIVVIMAGNENPTFFAKPTQINA. The short motif at 78-82 is the VIMAG element; the sequence is VIMAG.

Belongs to the GLUTAMINE DUMPER 1 (TC 9.B.60) family. As to expression, expressed in the vascular tissues, even in the minor veins of the leaves.

It localises to the membrane. Functionally, probable subunit of an amino acid transporter involved in the regulation of the amino acid metabolism. Stimulates amino acid export by activating nonselective amino acid facilitators. This Arabidopsis thaliana (Mouse-ear cress) protein is Protein GLUTAMINE DUMPER 7 (GDU7).